We begin with the raw amino-acid sequence, 489 residues long: Ketol-acid reductoisomerase (NADP(+)) (489 aa).

One can recognise a KARI N-terminal Rossmann domain in the interval 17-208; the sequence is LGVCEFMEQS…GGHKAGVLRS (192 aa). NADP(+) contacts are provided by residues 45–48, Arg-68, Arg-76, Ser-78, and 108–110; these read CGAQ and DKQ. The active site involves His-132. An NADP(+)-binding site is contributed by Gly-158. 2 consecutive KARI C-terminal knotted domains span residues 209-344 and 345-485; these read SFVA…KTAP and QEAP…MTAM. Residues Asp-217, Glu-221, Glu-389, and Glu-393 each coordinate Mg(2+). Ser-414 is a substrate binding site.

This sequence belongs to the ketol-acid reductoisomerase family. Requires Mg(2+) as cofactor.

The catalysed reaction is (2R)-2,3-dihydroxy-3-methylbutanoate + NADP(+) = (2S)-2-acetolactate + NADPH + H(+). It carries out the reaction (2R,3R)-2,3-dihydroxy-3-methylpentanoate + NADP(+) = (S)-2-ethyl-2-hydroxy-3-oxobutanoate + NADPH + H(+). It functions in the pathway amino-acid biosynthesis; L-isoleucine biosynthesis; L-isoleucine from 2-oxobutanoate: step 2/4. The protein operates within amino-acid biosynthesis; L-valine biosynthesis; L-valine from pyruvate: step 2/4. Involved in the biosynthesis of branched-chain amino acids (BCAA). Catalyzes an alkyl-migration followed by a ketol-acid reduction of (S)-2-acetolactate (S2AL) to yield (R)-2,3-dihydroxy-isovalerate. In the isomerase reaction, S2AL is rearranged via a Mg-dependent methyl migration to produce 3-hydroxy-3-methyl-2-ketobutyrate (HMKB). In the reductase reaction, this 2-ketoacid undergoes a metal-dependent reduction by NADPH to yield (R)-2,3-dihydroxy-isovalerate. The protein is Ketol-acid reductoisomerase (NADP(+)) of Flavobacterium johnsoniae (strain ATCC 17061 / DSM 2064 / JCM 8514 / BCRC 14874 / CCUG 350202 / NBRC 14942 / NCIMB 11054 / UW101) (Cytophaga johnsonae).